The primary structure comprises 135 residues: Transcription antitermination protein NusB (135 aa).

It belongs to the NusB family.

In terms of biological role, involved in transcription antitermination. Required for transcription of ribosomal RNA (rRNA) genes. Binds specifically to the boxA antiterminator sequence of the ribosomal RNA (rrn) operons. This is Transcription antitermination protein NusB from Shewanella halifaxensis (strain HAW-EB4).